An 84-amino-acid polypeptide reads, in one-letter code: Cell division topological specificity factor (84 aa).

Belongs to the MinE family.

Prevents the cell division inhibition by proteins MinC and MinD at internal division sites while permitting inhibition at polar sites. This ensures cell division at the proper site by restricting the formation of a division septum at the midpoint of the long axis of the cell. This Pseudomonas fluorescens (strain Pf0-1) protein is Cell division topological specificity factor.